A 127-amino-acid polypeptide reads, in one-letter code: Auxin-responsive protein SAUR76 (127 aa).

A disordered region spans residues 20-40 (SFNTKPNQPPAQTNHSRSSAV).

The protein belongs to the ARG7 family. Expressed in cotyledons, hypocotyls and roots of young seedlings. Expressed in emerging lateral root, leaves, flowers, stamens and filaments.

The protein resides in the nucleus. The protein localises to the cytoplasm. It localises to the cell membrane. Its function is as follows. May be involved in the regulation of ethylene receptor signaling. Promotes cell expansion and plant growth. Involved in the regulation of cell elongation. This is Auxin-responsive protein SAUR76 from Arabidopsis thaliana (Mouse-ear cress).